Consider the following 386-residue polypeptide: Palmitoyltransferase ZDHHC9 (386 aa).

The Cytoplasmic segment spans residues 1-35 (MSAVMITRKITRKWEKLPGKNTFCCDGRVMMARQK). A helical membrane pass occupies residues 36–56 (GVFYLTLFLIVGTCSLFFAFE). Over 57–63 (CPYLAVH) the chain is Lumenal. The chain crosses the membrane as a helical span at residues 64 to 84 (LSPAIPVFAVLLFVFVMAMLL). Over 85–183 (RTSFSDPGVL…NCVGKRNYRY (99 aa)) the chain is Cytoplasmic. Residues 139–189 (KYCYTCKIFRPPRASHCSICDNCVDRFDHHCPWVGNCVGKRNYRYFYLFTL) form the DHHC domain. Cys169 (S-palmitoyl cysteine intermediate) is an active-site residue. Residues 184–204 (FYLFTLSLSLLTIYIFAFDIV) traverse the membrane as a helical segment. Residues 205–224 (HVVLRSVDSGFVNTLKETPG) lie on the Lumenal side of the membrane. The chain crosses the membrane as a helical span at residues 225–245 (TVLEVLVCFFTLWSVVGLTGF). Over 246 to 386 (HTYLISLNQT…APAVIKESTH (141 aa)) the chain is Cytoplasmic. The segment covering 306 to 334 (SCSSAPSNGATTVPVNKSSNPATQTTKSS) has biased composition (polar residues). Positions 306 to 386 (SCSSAPSNGA…APAVIKESTH (81 aa)) are disordered.

It belongs to the DHHC palmitoyltransferase family. ERF2/ZDHHC9 subfamily.

Its subcellular location is the endoplasmic reticulum membrane. It localises to the golgi apparatus membrane. It catalyses the reaction L-cysteinyl-[protein] + hexadecanoyl-CoA = S-hexadecanoyl-L-cysteinyl-[protein] + CoA. Its function is as follows. Palmitoyltransferase that catalyzes the addition of palmitate onto various protein substrates, such as ADRB2, GSDMD, HRAS, NRAS and CGAS. This is Palmitoyltransferase ZDHHC9 from Danio rerio (Zebrafish).